A 572-amino-acid chain; its full sequence is Methionine--tRNA ligase (572 aa).

The 'HIGH' region motif lies at 11-21 (PYINGIKHLGN). Zn(2+)-binding residues include Cys-143, Cys-146, Cys-156, and Cys-159. The 'KMSKS' region motif lies at 346-350 (QFSTS). Thr-349 lines the ATP pocket.

This sequence belongs to the class-I aminoacyl-tRNA synthetase family. MetG type 1 subfamily. Monomer. It depends on Zn(2+) as a cofactor.

It is found in the cytoplasm. The catalysed reaction is tRNA(Met) + L-methionine + ATP = L-methionyl-tRNA(Met) + AMP + diphosphate. In terms of biological role, is required not only for elongation of protein synthesis but also for the initiation of all mRNA translation through initiator tRNA(fMet) aminoacylation. This chain is Methionine--tRNA ligase, found in Cereibacter sphaeroides (strain ATCC 17029 / ATH 2.4.9) (Rhodobacter sphaeroides).